The primary structure comprises 157 residues: Ubiquitin-like protein 4A (157 aa).

The Ubiquitin-like domain maps to 1 to 76 (MQLTVKALQG…LNLVVKPLEK (76 aa)). Residue K48 forms a Glycyl lysine isopeptide (Lys-Gly) (interchain with G-Cter in ubiquitin) linkage. S90 carries the phosphoserine modification. Residues 96-138 (WHLISKVLARHFSAADASRVLEQLQRDYERSLSRLTLDDIERL) form a required and sufficient for interaction with BAG6 region.

As to quaternary structure, component of the BAG6/BAT3 complex, at least composed of BAG6, UBL4A and GET4/TRC35. Interacts with BAG6; the interaction is direct and required for UBL4A protein stability. Interacts with USP13; may be indirect via BAG6. In terms of processing, polyubiquitinated. Ubiquitination by AMFR and deubiquitination by USP13 may regulate the interaction between the BAG6/BAT3 complex and SGTA and therefore may regulate client proteins fate.

It is found in the cytoplasm. Its subcellular location is the cytosol. The protein localises to the nucleus. Functionally, as part of a cytosolic protein quality control complex, the BAG6/BAT3 complex, maintains misfolded and hydrophobic patches-containing proteins in a soluble state and participates in their proper delivery to the endoplasmic reticulum or alternatively can promote their sorting to the proteasome where they undergo degradation. The BAG6/BAT3 complex is involved in the post-translational delivery of tail-anchored/type II transmembrane proteins to the endoplasmic reticulum membrane. Recruited to ribosomes, it interacts with the transmembrane region of newly synthesized tail-anchored proteins and together with SGTA and ASNA1 mediates their delivery to the endoplasmic reticulum. Client proteins that cannot be properly delivered to the endoplasmic reticulum are ubiquitinated and sorted to the proteasome. Similarly, the BAG6/BAT3 complex also functions as a sorting platform for proteins of the secretory pathway that are mislocalized to the cytosol either delivering them to the proteasome for degradation or to the endoplasmic reticulum. The BAG6/BAT3 complex also plays a role in the endoplasmic reticulum-associated degradation (ERAD), a quality control mechanism that eliminates unwanted proteins of the endoplasmic reticulum through their retrotranslocation to the cytosol and their targeting to the proteasome. It maintains these retrotranslocated proteins in an unfolded yet soluble state condition in the cytosol to ensure their proper delivery to the proteasome. This is Ubiquitin-like protein 4A (UBL4A) from Oryctolagus cuniculus (Rabbit).